Reading from the N-terminus, the 377-residue chain is MSTPSQAEVRRMIAAAGTIVVKVGSSSLTQPSGHLDPDKLDALAAALAQVRLMGGRVVLVSSGAIAAGFGPLGFDSRPVDVATQQATAAVGQGLLMARYETAFGRFGIRVGQILITAEDTIRATQYRNVERTLDRLLDLGVVPIINENDSLASNEIRFGDNDRLSALVANLVRAEALVLLTDVDALYTAPPSQPGSRRVEYVPNVIDALGDIQVSGSGSKVGTGGMVTKLEAARVAAVSGIPTVLTCASNAGPAMMGDPVGTVFAPVKARGSSRRLWIGFAADPRGTIVVDAGAGQAIRGGRASLLAAGALEVHGDFSAGDPVWIDAESGEHLARGLAGFDSEEIPQMLGRNTAQLKRFLGPQYAHPLVHRDNLVLV.

Lys-22 lines the ATP pocket. 3 residues coordinate substrate: Ser-62, Asp-149, and Asn-161. ATP is bound by residues 181-182 (TD) and 223-229 (TGGMVTK). In terms of domain architecture, PUA spans 285-363 (RGTIVVDAGA…AQLKRFLGPQ (79 aa)).

It belongs to the glutamate 5-kinase family.

The protein resides in the cytoplasm. It catalyses the reaction L-glutamate + ATP = L-glutamyl 5-phosphate + ADP. Its pathway is amino-acid biosynthesis; L-proline biosynthesis; L-glutamate 5-semialdehyde from L-glutamate: step 1/2. Its function is as follows. Catalyzes the transfer of a phosphate group to glutamate to form L-glutamate 5-phosphate. This is Glutamate 5-kinase from Bifidobacterium longum (strain DJO10A).